The following is a 506-amino-acid chain: Serine/threonine-protein kinase D6PKL1 (506 aa).

Positions 1-96 (MASKYGSGVL…TCSSFSGNNK (96 aa)) are disordered. Over residues 12–23 (ENKKEKGDKETP) the composition is skewed to basic and acidic residues. Residues 24–54 (ETSYSSQSVSVNTLADQVSSTLSFAPSSDSK) are compositionally biased toward polar residues. A compositionally biased stretch (basic and acidic residues) spans 55–67 (TGGEVKFNEKSDQ). Low complexity predominate over residues 77–92 (STSSDISDESTCSSFS). The Protein kinase domain maps to 123 to 456 (FRLLKRLGCG…ATEMKQHPFF (334 aa)). ATP contacts are provided by residues 129 to 137 (LGCGDIGTV) and Lys-152. The active-site Proton acceptor is Asp-248. A disordered region spans residues 475–495 (PVDYESAPATPAAATSTSVKS). A compositionally biased stretch (low complexity) spans 480–492 (SAPATPAAATSTS).

The protein belongs to the protein kinase superfamily. AGC Ser/Thr protein kinase family.

Its subcellular location is the cell membrane. It carries out the reaction L-seryl-[protein] + ATP = O-phospho-L-seryl-[protein] + ADP + H(+). The enzyme catalyses L-threonyl-[protein] + ATP = O-phospho-L-threonyl-[protein] + ADP + H(+). In terms of biological role, protein kinase that regulates the auxin transport activity of PIN auxin efflux facilitators by direct phosphorylation. D6PK-mediated PIN phosphorylation promotes auxin transport in the hypocotyl and this is a prerequisite for PHOT1-dependent hypocotyl bending. The protein is Serine/threonine-protein kinase D6PKL1 (D6PKL1) of Arabidopsis thaliana (Mouse-ear cress).